A 473-amino-acid chain; its full sequence is Glucose-1-phosphate adenylyltransferase small subunit, chloroplastic/amyloplastic (473 aa).

The disordered stretch occupies residues 1–36; the sequence is MDVPLASKTFPSPSPSKREQCNIDGHKSSSKHADLN. The segment covering 16–36 has biased composition (basic and acidic residues); it reads SKREQCNIDGHKSSSKHADLN.

The protein belongs to the bacterial/plant glucose-1-phosphate adenylyltransferase family. Heterotetramer. Abundantly expressed in the whole grains, a slightly less abundant expression is seen in leaves, while a low level expression is seen in the roots. A greater expression is seen in the endosperm than in the embryo and pericarp layers.

It is found in the plastid. It localises to the chloroplast. Its subcellular location is the amyloplast. The enzyme catalyses alpha-D-glucose 1-phosphate + ATP + H(+) = ADP-alpha-D-glucose + diphosphate. Its pathway is glycan biosynthesis; starch biosynthesis. Insensitive to 3'phosphoglycerate and orthophosphate. This protein plays a role in synthesis of starch. It catalyzes the synthesis of the activated glycosyl donor, ADP-glucose from Glc-1-P and ATP. The sequence is that of Glucose-1-phosphate adenylyltransferase small subunit, chloroplastic/amyloplastic (AGP-S) from Triticum aestivum (Wheat).